The sequence spans 440 residues: Protein ABHD8 (440 aa).

A disordered region spans residues 123 to 158; that stretch reads DPAGSDGRSAPGSGSGSGSGSGSGGRRRRARRPKRT. The span at 124–134 shows a compositional bias: low complexity; that stretch reads PAGSDGRSAPG. The segment covering 135–146 has biased composition (gly residues); sequence SGSGSGSGSGSG. Positions 147–158 are enriched in basic residues; sequence GRRRRARRPKRT. An AB hydrolase-1 domain is found at 178–280; that stretch reads VLFFIHGVGG…HKVIMINGGG (103 aa). Active-site charge relay system residues include serine 253, aspartate 371, and histidine 399.

It belongs to the AB hydrolase superfamily. As to quaternary structure, interacts with NLRP3 (via NACHT and LLR domains); this interaction is enhanced in the presence of NLRP3 inflammasome inducers, such as ATP, nigericin, silica, or alum. Interacts with ZDHHC12.

Its subcellular location is the cytoplasm. Functionally, negatively regulates NLRP3-driven inflammation. Promotes NLRP3 degradation through the chaperone-mediated autophagy (CMA) pathway, hence attenuating inflammasome activation and IL1B secretion. Acts by recruiting palmitoyltransferase ZDHHC12 to NLRP3, facilitating NLRP3 palmitoylation and subsequent degradation. This is Protein ABHD8 from Macaca fascicularis (Crab-eating macaque).